The chain runs to 164 residues: Osteocalcin 2b (164 aa).

An N-terminal signal peptide occupies residues 1–18; sequence MKSLTLLTICAVLSVSLS. The propeptide occupies 19–115; it reads MNDLALDVVL…LASVLLRRKR (97 aa). The span at 30-95 shows a compositional bias: low complexity; it reads PDPAAEPAPA…EAMAEDPAAA (66 aa). A disordered region spans residues 30–99; that stretch reads PDPAAEPAPA…EDPAAATEPE (70 aa). In terms of domain architecture, Gla spans 128–160; the sequence is QVESLSEVCELNLACEHMAETAGIVAAYTAYYG. Glu130, Glu134, and Glu137 together coordinate Ca(2+). Residues Glu130, Glu134, and Glu137 each carry the 4-carboxyglutamate modification. Cys136 and Cys142 are oxidised to a cystine.

It belongs to the osteocalcin/matrix Gla protein family. In terms of processing, gamma-carboxyglutamate residues are formed by vitamin K dependent carboxylation. These residues are essential for the binding of calcium.

Its subcellular location is the secreted. Functionally, binds strongly to apatite and calcium. This Oncorhynchus mykiss (Rainbow trout) protein is Osteocalcin 2b.